The primary structure comprises 336 residues: Glyceraldehyde-3-phosphate dehydrogenase 1 (336 aa).

NAD(+) contacts are provided by residues 12–13 (RI), Asp34, and Arg79. Residues 149-151 (SCT), Thr180, 209-210 (TG), and Arg232 each bind D-glyceraldehyde 3-phosphate. Cys150 serves as the catalytic Nucleophile. Residue Asn314 coordinates NAD(+).

Belongs to the glyceraldehyde-3-phosphate dehydrogenase family. In terms of assembly, homotetramer.

Its subcellular location is the cytoplasm. It catalyses the reaction D-glyceraldehyde 3-phosphate + phosphate + NAD(+) = (2R)-3-phospho-glyceroyl phosphate + NADH + H(+). Its pathway is carbohydrate degradation; glycolysis; pyruvate from D-glyceraldehyde 3-phosphate: step 1/5. With respect to regulation, inhibited by koningic acid through the interaction of cysteine residues with koningic acid even at very low concentrations. The protein is Glyceraldehyde-3-phosphate dehydrogenase 1 (gpd1) of Trichoderma koningii (Hypocrea koningii).